A 222-amino-acid chain; its full sequence is Putative N-acetylmannosamine-6-phosphate 2-epimerase (222 aa).

This sequence belongs to the NanE family.

It carries out the reaction an N-acyl-D-glucosamine 6-phosphate = an N-acyl-D-mannosamine 6-phosphate. It functions in the pathway amino-sugar metabolism; N-acetylneuraminate degradation; D-fructose 6-phosphate from N-acetylneuraminate: step 3/5. Its function is as follows. Converts N-acetylmannosamine-6-phosphate (ManNAc-6-P) to N-acetylglucosamine-6-phosphate (GlcNAc-6-P). The polypeptide is Putative N-acetylmannosamine-6-phosphate 2-epimerase (Staphylococcus aureus (strain bovine RF122 / ET3-1)).